The chain runs to 1389 residues: DNA-directed RNA polymerase subunit beta' (1389 aa).

C73, C75, C88, and C91 together coordinate Zn(2+). Residues D464, D466, and D468 each contribute to the Mg(2+) site. 4 residues coordinate Zn(2+): C810, C884, C891, and C894.

Belongs to the RNA polymerase beta' chain family. In terms of assembly, the RNAP catalytic core consists of 2 alpha, 1 beta, 1 beta' and 1 omega subunit. When a sigma factor is associated with the core the holoenzyme is formed, which can initiate transcription. Mg(2+) serves as cofactor. The cofactor is Zn(2+).

The catalysed reaction is RNA(n) + a ribonucleoside 5'-triphosphate = RNA(n+1) + diphosphate. Its function is as follows. DNA-dependent RNA polymerase catalyzes the transcription of DNA into RNA using the four ribonucleoside triphosphates as substrates. This chain is DNA-directed RNA polymerase subunit beta', found in Pelagibacter ubique (strain HTCC1062).